Consider the following 303-residue polypeptide: Glutathione transport system permease protein GsiD (303 aa).

6 consecutive transmembrane segments (helical) span residues A40 to I60, L105 to L125, L144 to I164, A165 to G185, I222 to F242, and V266 to F286. In terms of domain architecture, ABC transmembrane type-1 spans A101 to G290.

Belongs to the binding-protein-dependent transport system permease family. The complex is composed of two ATP-binding proteins (GsiA), two transmembrane proteins (GsiC and GsiD) and a solute-binding protein (GsiB).

Its subcellular location is the cell inner membrane. Part of the ABC transporter complex GsiABCD involved in glutathione import. Probably responsible for the translocation of the substrate across the membrane. The chain is Glutathione transport system permease protein GsiD from Escherichia coli O1:K1 / APEC.